A 266-amino-acid chain; its full sequence is Ribosome-recycling factor, chloroplastic (266 aa).

Over residues 1–26 the composition is skewed to low complexity; it reads MPPLHAVSPAAAAAPPRALSSAARVP. The tract at residues 1 to 30 is disordered; that stretch reads MPPLHAVSPAAAAAPPRALSSAARVPQRPG. The N-terminal 74 residues, 1–74, are a transit peptide targeting the chloroplast; sequence MPPLHAVSPA…SDKRAVLRHA (74 aa). Coiled-coil stretches lie at residues 75–109 and 207–266; these read TIEE…NTVR and VAIR…LMKI.

This sequence belongs to the RRF family.

It localises to the plastid. The protein resides in the chloroplast. In terms of biological role, responsible for the release of ribosomes from messenger RNA at the termination of chloroplastic protein biosynthesis. This is Ribosome-recycling factor, chloroplastic from Oryza sativa subsp. indica (Rice).